Here is a 72-residue protein sequence, read N- to C-terminus: MSLGLAIAVGIVLGVVASSLCNKNNHLNRSREFSVIQKDEELNVLEINFNDFYRTTLNVGELSMSTRKTNNC.

A signal peptide spans 1-17 (MSLGLAIAVGIVLGVVA).

This is an uncharacterized protein from Schizosaccharomyces pombe (strain 972 / ATCC 24843) (Fission yeast).